The following is a 204-amino-acid chain: Leucyl/phenylalanyl-tRNA--protein transferase (204 aa).

Belongs to the L/F-transferase family.

Its subcellular location is the cytoplasm. The catalysed reaction is N-terminal L-lysyl-[protein] + L-leucyl-tRNA(Leu) = N-terminal L-leucyl-L-lysyl-[protein] + tRNA(Leu) + H(+). It carries out the reaction N-terminal L-arginyl-[protein] + L-leucyl-tRNA(Leu) = N-terminal L-leucyl-L-arginyl-[protein] + tRNA(Leu) + H(+). The enzyme catalyses L-phenylalanyl-tRNA(Phe) + an N-terminal L-alpha-aminoacyl-[protein] = an N-terminal L-phenylalanyl-L-alpha-aminoacyl-[protein] + tRNA(Phe). Functionally, functions in the N-end rule pathway of protein degradation where it conjugates Leu, Phe and, less efficiently, Met from aminoacyl-tRNAs to the N-termini of proteins containing an N-terminal arginine or lysine. The chain is Leucyl/phenylalanyl-tRNA--protein transferase from Sinorhizobium medicae (strain WSM419) (Ensifer medicae).